Consider the following 674-residue polypeptide: Xaa-Pro aminopeptidase 2 (674 aa).

A signal peptide spans 1-22 (MAQAYWQCYPWLVLLCACAWSY). An N-linked (GlcNAc...) asparagine glycan is attached at Asn-65. Arg-116 contributes to the substrate binding site. N-linked (GlcNAc...) asparagine glycosylation is found at Asn-270, Asn-278, and Asn-293. Residue His-430 coordinates substrate. Zn(2+)-binding residues include Asp-450, Asp-461, and His-524. His-524, His-533, and Glu-555 together coordinate substrate. Residues Glu-555 and Glu-569 each coordinate Zn(2+). Ala-650 carries the GPI-anchor amidated alanine lipid modification. A propeptide spans 651–674 (RAPHIISWTSLWVASALAILSWSS) (removed in mature form).

It belongs to the peptidase M24B family. Homotrimer. Zn(2+) serves as cofactor. In terms of processing, N-glycosylated. As to expression, strongly expressed in small intestine, heart and lung. Also detected in testis, skeletal muscle, spleen, liver, kidney, brain, uterus, eye, lymph node, thymus, stomach, prostate and bone marrow.

It is found in the cell membrane. It catalyses the reaction Release of any N-terminal amino acid, including proline, that is linked to proline, even from a dipeptide or tripeptide.. In terms of biological role, membrane-bound metalloprotease which catalyzes the removal of a penultimate prolyl residue from the N-termini of peptides, such as Arg-Pro-Pro. May play a role in the metabolism of the vasodilator bradykinin. This is Xaa-Pro aminopeptidase 2 from Mus musculus (Mouse).